Reading from the N-terminus, the 91-residue chain is uncharacterized protein (91 aa).

The protein belongs to the FrmR/RcnR family.

It is found in the cytoplasm. This is an uncharacterized protein from Serratia marcescens.